The following is a 61-amino-acid chain: MLNIFSLIWICLNSALYSSGFFFGKLPEAYAFLNPIIDFMPVIPVFFFLLAFVWQAAVSFR.

The propeptide occupies 1–24 (MLNIFSLIWICLNSALYSSGFFFG). A helical transmembrane segment spans residues 36-56 (IIDFMPVIPVFFFLLAFVWQA).

Belongs to the PsbK family. In terms of assembly, PSII is composed of 1 copy each of membrane proteins PsbA, PsbB, PsbC, PsbD, PsbE, PsbF, PsbH, PsbI, PsbJ, PsbK, PsbL, PsbM, PsbT, PsbX, PsbY, PsbZ, Psb30/Ycf12, at least 3 peripheral proteins of the oxygen-evolving complex and a large number of cofactors. It forms dimeric complexes.

Its subcellular location is the plastid. The protein resides in the chloroplast thylakoid membrane. Its function is as follows. One of the components of the core complex of photosystem II (PSII). PSII is a light-driven water:plastoquinone oxidoreductase that uses light energy to abstract electrons from H(2)O, generating O(2) and a proton gradient subsequently used for ATP formation. It consists of a core antenna complex that captures photons, and an electron transfer chain that converts photonic excitation into a charge separation. This chain is Photosystem II reaction center protein K, found in Coffea arabica (Arabian coffee).